A 48-amino-acid polypeptide reads, in one-letter code: Sperm protamine R3 isoform 2 (48 aa).

Residues Ala-1–Ser-29 are compositionally biased toward basic residues. The disordered stretch occupies residues Ala-1–Pro-48.

In terms of tissue distribution, testis.

The protein resides in the nucleus. It localises to the chromosome. In terms of biological role, protamines substitute for histones in the chromatin of sperm during the haploid phase of spermatogenesis. They compact sperm DNA into a highly condensed, stable and inactive complex. The protein is Sperm protamine R3 isoform 2 of Hydrolagus colliei (Spotted ratfish).